The following is a 431-amino-acid chain: 4-hydroxy-3-methylbut-2-en-1-yl diphosphate synthase (flavodoxin) (431 aa).

[4Fe-4S] cluster-binding residues include C310, C313, C356, and E363.

It belongs to the IspG family. The cofactor is [4Fe-4S] cluster.

It catalyses the reaction (2E)-4-hydroxy-3-methylbut-2-enyl diphosphate + oxidized [flavodoxin] + H2O + 2 H(+) = 2-C-methyl-D-erythritol 2,4-cyclic diphosphate + reduced [flavodoxin]. The protein operates within isoprenoid biosynthesis; isopentenyl diphosphate biosynthesis via DXP pathway; isopentenyl diphosphate from 1-deoxy-D-xylulose 5-phosphate: step 5/6. Its function is as follows. Converts 2C-methyl-D-erythritol 2,4-cyclodiphosphate (ME-2,4cPP) into 1-hydroxy-2-methyl-2-(E)-butenyl 4-diphosphate. The sequence is that of 4-hydroxy-3-methylbut-2-en-1-yl diphosphate synthase (flavodoxin) from Rhodopseudomonas palustris (strain HaA2).